The sequence spans 271 residues: Chymotrypsin BII (271 aa).

Residues 1 to 15 (MIGKLSLLLVCVAVA) form the signal peptide. Residues 16 to 45 (SGNPAAGKPWHWKSPKPLVDPRIHVNATPR) constitute a propeptide, activation peptide. Residues 46–268 (IVGGVEATPH…YLDWIEQKTG (223 aa)) form the Peptidase S1 domain. Residues C71 and C87 are joined by a disulfide bond. Active-site charge relay system residues include H86 and D132. 2 disulfides stabilise this stretch: C196–C209 and C219–C245. S223 functions as the Charge relay system in the catalytic mechanism.

It belongs to the peptidase S1 family.

Its subcellular location is the secreted. The protein resides in the extracellular space. The enzyme catalyses Preferential cleavage: Tyr-|-Xaa, Trp-|-Xaa, Phe-|-Xaa, Leu-|-Xaa.. In terms of biological role, serine protease with chymotryptic and collagenolytic activities. The sequence is that of Chymotrypsin BII from Penaeus vannamei (Whiteleg shrimp).